The following is a 338-amino-acid chain: MENLDALVAQALEAVQSAEDVNALEQIRVHYLGKKGELTQVMKTLGNLPAEERPQVGALINVAKERVTEVLNARKASLEEADLAAKLAAESIDVTLPGRGQASGGLHPITRTLERIEQFFTHIGYGIAEGPEVEDDYHNFEALNIPGHHPARSMHDTFYFNANMLLRTHTSPVQVRTMEANKPPIRIVCPGRVYRSDSDITHSPMFHQVEGLLVDRDINFADLKGTIEEFLRVFFEKELAVRFRPSFFPFTEPSAEVDMECVMCSGKGCRVCKQTGWLEVMGCGMVHPNVLRMSGIDPEEFSGFAFGMGVERLAMLRYGVNDLRLFFDNDLRFLAQFR.

Glu-252 serves as a coordination point for Mg(2+).

The protein belongs to the class-II aminoacyl-tRNA synthetase family. Phe-tRNA synthetase alpha subunit type 1 subfamily. As to quaternary structure, tetramer of two alpha and two beta subunits. Mg(2+) serves as cofactor.

It is found in the cytoplasm. It catalyses the reaction tRNA(Phe) + L-phenylalanine + ATP = L-phenylalanyl-tRNA(Phe) + AMP + diphosphate + H(+). The protein is Phenylalanine--tRNA ligase alpha subunit of Pseudomonas fluorescens (strain SBW25).